The chain runs to 396 residues: S-adenosylmethionine synthase (396 aa).

His16 provides a ligand contact to ATP. Residue Asp18 participates in Mg(2+) binding. Glu44 provides a ligand contact to K(+). Glu57 and Gln100 together coordinate L-methionine. The segment at 100–110 (QSQDIARGVDN) is flexible loop. ATP-binding positions include 162–164 (DGK), Asp237, 243–244 (RK), Ala260, and Lys264. Asp237 is an L-methionine binding site. An L-methionine-binding site is contributed by Lys268.

It belongs to the AdoMet synthase family. In terms of assembly, homotetramer; dimer of dimers. Mg(2+) serves as cofactor. Requires K(+) as cofactor.

It localises to the cytoplasm. The enzyme catalyses L-methionine + ATP + H2O = S-adenosyl-L-methionine + phosphate + diphosphate. It functions in the pathway amino-acid biosynthesis; S-adenosyl-L-methionine biosynthesis; S-adenosyl-L-methionine from L-methionine: step 1/1. In terms of biological role, catalyzes the formation of S-adenosylmethionine (AdoMet) from methionine and ATP. The overall synthetic reaction is composed of two sequential steps, AdoMet formation and the subsequent tripolyphosphate hydrolysis which occurs prior to release of AdoMet from the enzyme. This Myxococcus xanthus protein is S-adenosylmethionine synthase.